A 133-amino-acid chain; its full sequence is ATP synthase epsilon chain, chloroplastic (133 aa).

The protein belongs to the ATPase epsilon chain family. As to quaternary structure, F-type ATPases have 2 components, CF(1) - the catalytic core - and CF(0) - the membrane proton channel. CF(1) has five subunits: alpha(3), beta(3), gamma(1), delta(1), epsilon(1). CF(0) has three main subunits: a, b and c.

The protein localises to the plastid. It is found in the chloroplast thylakoid membrane. Functionally, produces ATP from ADP in the presence of a proton gradient across the membrane. The sequence is that of ATP synthase epsilon chain, chloroplastic from Phaeodactylum tricornutum (strain CCAP 1055/1).